The sequence spans 137 residues: Diacylglycerol kinase (137 aa).

An a divalent metal cation-binding site is contributed by Glu-42. A run of 2 helical transmembrane segments spans residues 49-67 (LIAF…ATFF) and 73-89 (AILF…NTAI). Glu-83 (proton acceptor) is an active-site residue. Glu-90 contributes to the a divalent metal cation binding site. A helical membrane pass occupies residues 112–132 (SFACLCLIVANGVYAAYVVIF).

The protein belongs to the bacterial diacylglycerol kinase family. Mg(2+) serves as cofactor.

It is found in the cell inner membrane. It catalyses the reaction a 1,2-diacyl-sn-glycerol + ATP = a 1,2-diacyl-sn-glycero-3-phosphate + ADP + H(+). In terms of biological role, catalyzes the ATP-dependent phosphorylation of sn-l,2-diacylglycerol (DAG) to phosphatidic acid. Involved in the recycling of diacylglycerol produced as a by-product during membrane-derived oligosaccharide (MDO) biosynthesis. The polypeptide is Diacylglycerol kinase (dgkA) (Sinorhizobium sp).